A 358-amino-acid polypeptide reads, in one-letter code: Peroxisome biogenesis protein 3-1 (358 aa).

The chain crosses the membrane as a helical span at residues 15–32 (ILVTTTCLGSGYLLYKLY). A coiled-coil region spans residues 33 to 62 (NAHTRKLADLERELANERENDEIIKTQMKA).

It belongs to the peroxin-3 family.

The protein localises to the peroxisome membrane. Involved in morphology determination of peroxisomes, but not in import of peroxisomal matrix proteins. May act as a docking factor for PEX19 and be necessary for the import of peroxisomal membrane proteins in the peroxisomes. The protein is Peroxisome biogenesis protein 3-1 (PEX3-1) of Arabidopsis thaliana (Mouse-ear cress).